Reading from the N-terminus, the 271-residue chain is L-aspartate dehydrogenase (271 aa).

NAD(+)-binding residues include Ala124 and Asn192. His222 is an active-site residue.

This sequence belongs to the L-aspartate dehydrogenase family.

The enzyme catalyses L-aspartate + NADP(+) + H2O = oxaloacetate + NH4(+) + NADPH + H(+). It carries out the reaction L-aspartate + NAD(+) + H2O = oxaloacetate + NH4(+) + NADH + H(+). Its pathway is cofactor biosynthesis; NAD(+) biosynthesis; iminoaspartate from L-aspartate (dehydrogenase route): step 1/1. In terms of biological role, specifically catalyzes the NAD or NADP-dependent dehydrogenation of L-aspartate to iminoaspartate. This is L-aspartate dehydrogenase from Methanosarcina barkeri (strain Fusaro / DSM 804).